Reading from the N-terminus, the 1400-residue chain is DNA-directed RNA polymerase subunit beta' (1400 aa).

Zn(2+) is bound by residues Cys71, Cys73, Cys86, and Cys89. Residues Asp462, Asp464, and Asp466 each coordinate Mg(2+). Zn(2+) is bound by residues Cys811, Cys885, Cys892, and Cys895.

It belongs to the RNA polymerase beta' chain family. As to quaternary structure, the RNAP catalytic core consists of 2 alpha, 1 beta, 1 beta' and 1 omega subunit. When a sigma factor is associated with the core the holoenzyme is formed, which can initiate transcription. It depends on Mg(2+) as a cofactor. Zn(2+) serves as cofactor.

The catalysed reaction is RNA(n) + a ribonucleoside 5'-triphosphate = RNA(n+1) + diphosphate. Its function is as follows. DNA-dependent RNA polymerase catalyzes the transcription of DNA into RNA using the four ribonucleoside triphosphates as substrates. The protein is DNA-directed RNA polymerase subunit beta' of Brucella ovis (strain ATCC 25840 / 63/290 / NCTC 10512).